Consider the following 273-residue polypeptide: Flagellin FljK (273 aa).

It belongs to the bacterial flagellin family. In C.crescentus, the flagellar filament is composed of multiple flagellins of 29 kDa; 27 kDa and 25 kDa.

Its subcellular location is the secreted. It localises to the bacterial flagellum. Functionally, flagellin is the subunit protein which polymerizes to form the filaments of bacterial flagella. The chain is Flagellin FljK (fljK) from Caulobacter vibrioides (strain ATCC 19089 / CIP 103742 / CB 15) (Caulobacter crescentus).